A 416-amino-acid polypeptide reads, in one-letter code: Adenylosuccinate synthetase (416 aa).

Residues 13-19 and 41-43 each bind GTP; these read GDEGKGK and GHT. Asp-14 (proton acceptor) is an active-site residue. Residues Asp-14 and Gly-41 each coordinate Mg(2+). IMP contacts are provided by residues 14 to 17, 39 to 42, Thr-126, Arg-140, Gln-220, Thr-235, and Arg-299; these read DEGK and NAGH. His-42 serves as the catalytic Proton donor. 295 to 301 contacts substrate; the sequence is TTTGRRR. GTP contacts are provided by residues Arg-301, 327-329, and 405-407; these read KLD and STS.

The protein belongs to the adenylosuccinate synthetase family. Homodimer. Requires Mg(2+) as cofactor.

It is found in the cytoplasm. The enzyme catalyses IMP + L-aspartate + GTP = N(6)-(1,2-dicarboxyethyl)-AMP + GDP + phosphate + 2 H(+). It functions in the pathway purine metabolism; AMP biosynthesis via de novo pathway; AMP from IMP: step 1/2. Functionally, plays an important role in the de novo pathway of purine nucleotide biosynthesis. Catalyzes the first committed step in the biosynthesis of AMP from IMP. The sequence is that of Adenylosuccinate synthetase from Campylobacter curvus (strain 525.92).